A 171-amino-acid chain; its full sequence is Ribosome maturation factor RimM (171 aa).

Residues 97-170 enclose the PRC barrel domain; that stretch reads EGEYYYHEII…LVTIHVMEGL (74 aa).

This sequence belongs to the RimM family. In terms of assembly, binds ribosomal protein uS19.

The protein resides in the cytoplasm. An accessory protein needed during the final step in the assembly of 30S ribosomal subunit, possibly for assembly of the head region. Essential for efficient processing of 16S rRNA. May be needed both before and after RbfA during the maturation of 16S rRNA. It has affinity for free ribosomal 30S subunits but not for 70S ribosomes. The sequence is that of Ribosome maturation factor RimM from Bacillus cereus (strain ATCC 14579 / DSM 31 / CCUG 7414 / JCM 2152 / NBRC 15305 / NCIMB 9373 / NCTC 2599 / NRRL B-3711).